The primary structure comprises 1603 residues: MEAVIKVISSACKTYCGKTSPSKKEIGAMLSLLQKEGLLMSPSDLYSPGSWDPITAALSQRAMILGKSGELKTWGLVLGALKAAREEQVTSEQAKFWLGLGGGRVSPPGPECIEKPATERRIDKGEEVGETTVQRDAKMAPEETATPKTVGTSCYHCGTAIGCNCATASAPPPPYVGSGLYPSLAGVGEQQGQGGDTPPGAEQSRAEPGHAGQAPGPALTDWARVREELASTGPPVVAMPVVIKTEGPAWTPLEPKLITRLADTVRTKGLRSPITMAEVEALMSSPLLPHDVTNLMRVILGPAPYALWMDAWGVQLQTVIAAATRDPRHPANGQGRGERTNLNRLKGLADGMVGNPQGQAALLRPGELVAITASALQAFREVARLAEPAGPWADIMQGPSESFVDFANRLIKAVEGSDLPPSARAPVIIDCFRQKSQPDIQQLIRTAPSTLTTPGEIIKYVLDRQKTAPLTDQGIAAAMSSAIQPLIMAVVNRERDGQTGSGGRARGLCYTCGSPGHYQAQCPKKRKSGNSRERCQLCNGMGHNAKQCRKRDGNQGQRPGKGLSSGPWPGPEPPAVSLAMTMEHKDRPLVRVILTNTGSHPVKQRSVYITALLDSGADITIISEEDWPTDWPVMEAANPQIHGIGGGIPMRKSRDMIELGVINRDGSLERPLLLFPAVAMVRGSILGRDCLQGLGLRLTNLIGRATVLTVALHLAIPLKWKPDHTPVWIDQWPLPEGKLVALTQLVEKELQLGHIEPSLSCWNTPVFVIRKASGSYRLLHDLRAVNAKLVPFGAVQQGAPVLSALPRGWPLMVLDLKDCFFSIPLAEQDREAFAFTLPSVNNQAPARRFQWKVLPQGMTCSPTICQLVVGQVLEPLRLKHPSLCMLHYMDDLLLAASSHDGLEAAGEEVISTLERAGFTISPDKVQREPGVQYLGYKLGSTYVAPVGLVAEPRIATLWDVQKLVGSLQWLRPALGIPPRLMGPFYEQLRGSDPNEAREWNLDMKMAWREIVRLSTTAALERWDPALPLEGAVARCEQGAIGVLGQGLSTHPRPCLWLFSTQPTKAFTAWLEVLTLLITKLRASAVRTFGKEVDILLLPACFREDLPLPEGILLALKGFAGKIRSSDTPSIFDIARPLHVSLKVRVTDHPVPGPTVFTDASSSTHKGVVVWREGPRWEIKEIADLGASVQQLEARAVAMALLLWPTTPTNVVTDSAFVAKMLLKMGQEGVPSTAAAFILEDALSQRSAMAAVLHVRSHSEVPGFFTEGNDVADSQATFQAYPLREAKDLHTALHIGPRALSKACNISMQQAREVVQTCPHCNSAPALEAGVNPRGLGPLQIWQTDFTLEPRMAPRSWLAVTVDTASSAIVVTQHGRVTSVAVQHHWATAIAVLGRPKAIKTDNGSCFTSKSTREWLARWGIAHTTGIPGNSQGQAMVERANRLLKDRIRVLAEGDGFMKRIPTSKQGELLAKAMYALNHFERGENTKTPIQKHWRPTVLTEGPPVKIRIETGEWEKGWNVLVWGRGYAAVKNRDTDKVIWVPSRKVKPDITQKDEVTKKDEASPLFAGISDWIPWEDEQEGLQGETASNKQERPGEDTLAANES.

Residues 128–141 (VGETTVQRDAKMAP) are compositionally biased toward basic and acidic residues. Positions 128–150 (VGETTVQRDAKMAPEETATPKTV) are disordered. A PPXY motif motif is present at residues 172–175 (PPPY). The LYPX(n)L motif motif lies at 180–184 (LYPSL). The interval 181-217 (YPSLAGVGEQQGQGGDTPPGAEQSRAEPGHAGQAPGP) is disordered. Involved in capsid protein dimerization stretches follow at residues 217 to 259 (PALT…KLIT), 290 to 298 (HDVTNLMRV), and 351 to 362 (GMVGNPQGQAAL). Residues 219–229 (LTDWARVREEL) carry the Nuclear export signal motif. CCHC-type zinc fingers lie at residues 507-524 (GLCY…QCPK) and 533-550 (ERCQ…QCRK). The Nuclear/nucleolar localization signal motif lies at 524–527 (KKRK). The tract at residues 543 to 575 (HNAKQCRKRDGNQGQRPGKGLSSGPWPGPEPPA) is disordered. Residues 609 to 690 (ITALLDSGAD…VRGSILGRDC (82 aa)) enclose the Peptidase A2 domain. Catalysis depends on Asp-614, which acts as the For protease activity; shared with dimeric partner. The Reverse transcriptase domain maps to 750–938 (LQLGHIEPSL…PGVQYLGYKL (189 aa)). Positions 815, 890, 891, 1158, 1192, 1213, and 1272 each coordinate Mg(2+). Residues 1149–1280 (PVPGPTVFTD…ADSQATFQAY (132 aa)) form the RNase H type-1 domain. The Integrase-type zinc finger occupies 1280–1321 (YPLREAKDLHTALHIGPRALSKACNISMQQAREVVQTCPHCN). His-1289, His-1293, Cys-1317, and Cys-1320 together coordinate Zn(2+). The 164-residue stretch at 1333–1496 (RGLGPLQIWQ…TPIQKHWRPT (164 aa)) folds into the Integrase catalytic domain. Residues Asp-1344, Asp-1401, and Glu-1437 each contribute to the Mg(2+) site. Positions 1502 to 1550 (PPVKIRIETGEWEKGWNVLVWGRGYAAVKNRDTDKVIWVPSRKVKPDIT) form a DNA-binding region, integrase-type. The tract at residues 1548-1567 (DITQKDEVTKKDEASPLFAG) is involved in homooctamerization. The interval 1569–1603 (SDWIPWEDEQEGLQGETASNKQERPGEDTLAANES) is disordered.

As to quaternary structure, active as a homodimer. In terms of assembly, homodimer. Homomultimer. Homohexamer. Homodimer; further associates as a homooctamer. As to quaternary structure, heterodimer of alpha and beta subunits. Three forms of RT exist: alpha-alpha (alpha-Pol), beta-beta (beta-Pol), and alpha-beta, with the major form being the heterodimer. Both the polymerase and RNase H active sites are located in the alpha subunit of heterodimeric RT alpha-beta. The cofactor is Mg(2+). Requires Mn(2+) as cofactor. In terms of processing, specific enzymatic cleavages in vivo yield mature proteins. Post-translationally, capsid protein p27: The cleavage at the C-terminus is slowly trimmed by the viral protease, sometimes being cut internally thereby generating the short version of the capsid protein and a capsid protein C-terminally extended by 3 amino acids in a ratio of 2:1.

It localises to the virion. The enzyme catalyses DNA(n) + a 2'-deoxyribonucleoside 5'-triphosphate = DNA(n+1) + diphosphate. It catalyses the reaction Endonucleolytic cleavage to 5'-phosphomonoester.. In terms of biological role, capsid protein p27: Self-associates to form the irregular polyhedron core composed of hexamers and pentamers, that encapsulates the genomic RNA-nucleocapsid complex. Assembles as a tube in vitro. Binds to inositol hexakisphosphate (IP6), which allows the assembly of the polyhedral capsid. Functionally, plays a role in the oligomerization of the Gag polyprotein and in the stabilization of the immature particle. Essential layering element during tube assembly. Allows the cooperative binging of Gag to the host plasma membrane. Binds strongly to viral nucleic acids and promotes their packaging. Plays a role in the maturation-stabilization of the viral dimeric RNA via highly structured zinc-binding motifs. Its function is as follows. The aspartyl protease mediates proteolytic cleavages of Gag and Gag-Pol polyproteins during or shortly after the release of the virion from the plasma membrane. Cleavages take place as an ordered, step-wise cascade to yield mature proteins. This process is called maturation. Displays maximal activity during the budding process just prior to particle release from the cell. In terms of biological role, catalyzes viral DNA integration into the host chromosome, by performing a series of DNA cutting and joining reactions. This recombination event is an essential step in the viral replication cycle. Has a strong preference for using the 3'-OH at the viral DNA end as a nucleophile. This Gallus gallus (Chicken) protein is Gag-Pol polyprotein (gag-pol).